The primary structure comprises 208 residues: MDAIVKNFPGAGAKPDVAEARPSQAEAEEAVRVLLRWAGENPAREGLLDTPKRVAKAYRELFAGYELNVQDVLGTTFEEVGGYDDVVLVRDIPFFSHCEHHMVPIVGKAHVAYLPAGRVLGLSKIARVVEIFGRRLQTQENMTAQIARSIEETLKPRGVAVMIDAEHMCMSMRGVNKQGSTTLTTSFTGTFKNDPAEQVRFMTMVRNR.

Residues C98, H101, and C169 each contribute to the Zn(2+) site.

This sequence belongs to the GTP cyclohydrolase I family. Toroid-shaped homodecamer, composed of two pentamers of five dimers.

It catalyses the reaction GTP + H2O = 7,8-dihydroneopterin 3'-triphosphate + formate + H(+). Its pathway is cofactor biosynthesis; 7,8-dihydroneopterin triphosphate biosynthesis; 7,8-dihydroneopterin triphosphate from GTP: step 1/1. This chain is GTP cyclohydrolase 1, found in Agrobacterium fabrum (strain C58 / ATCC 33970) (Agrobacterium tumefaciens (strain C58)).